The chain runs to 263 residues: Proteasome subunit alpha type-1 (263 aa).

Met1 is modified (N-acetylmethionine). Ser110 bears the Phosphoserine; alternate mark. Ser110 is a glycosylation site (O-linked (GlcNAc) serine; alternate). Lys115 is covalently cross-linked (Glycyl lysine isopeptide (Lys-Gly) (interchain with G-Cter in ubiquitin)). The residue at position 177 (Ser177) is a Phosphoserine. Residue Lys208 forms a Glycyl lysine isopeptide (Lys-Gly) (interchain with G-Cter in ubiquitin) linkage. Residues 232–263 (FLEGLEERPQRKAQPAQPADEPAEKADEPMEH) form a disordered region. A compositionally biased stretch (basic and acidic residues) spans 253-263 (PAEKADEPMEH).

It belongs to the peptidase T1A family. The 26S proteasome consists of a 20S proteasome core and two 19S regulatory subunits. The 20S proteasome core is a barrel-shaped complex made of 28 subunits that are arranged in four stacked rings. The two outer rings are each formed by seven alpha subunits, and the two inner rings are formed by seven beta subunits. The proteolytic activity is exerted by three beta-subunits PSMB5, PSMB6 and PSMB7. Interacts with NOTCH3. Interacts with ZFAND1.

It localises to the cytoplasm. The protein localises to the nucleus. In terms of biological role, component of the 20S core proteasome complex involved in the proteolytic degradation of most intracellular proteins. This complex plays numerous essential roles within the cell by associating with different regulatory particles. Associated with two 19S regulatory particles, forms the 26S proteasome and thus participates in the ATP-dependent degradation of ubiquitinated proteins. The 26S proteasome plays a key role in the maintenance of protein homeostasis by removing misfolded or damaged proteins that could impair cellular functions, and by removing proteins whose functions are no longer required. Associated with the PA200 or PA28, the 20S proteasome mediates ubiquitin-independent protein degradation. This type of proteolysis is required in several pathways including spermatogenesis (20S-PA200 complex) or generation of a subset of MHC class I-presented antigenic peptides (20S-PA28 complex). The polypeptide is Proteasome subunit alpha type-1 (Homo sapiens (Human)).